The following is a 137-amino-acid chain: Large ribosomal subunit protein uL16 (137 aa).

This sequence belongs to the universal ribosomal protein uL16 family. In terms of assembly, part of the 50S ribosomal subunit.

In terms of biological role, binds 23S rRNA and is also seen to make contacts with the A and possibly P site tRNAs. The sequence is that of Large ribosomal subunit protein uL16 from Acinetobacter baylyi (strain ATCC 33305 / BD413 / ADP1).